The following is a 274-amino-acid chain: 2-dehydro-3-deoxyphosphooctonate aldolase (274 aa).

Belongs to the KdsA family.

It localises to the cytoplasm. The catalysed reaction is D-arabinose 5-phosphate + phosphoenolpyruvate + H2O = 3-deoxy-alpha-D-manno-2-octulosonate-8-phosphate + phosphate. It functions in the pathway carbohydrate biosynthesis; 3-deoxy-D-manno-octulosonate biosynthesis; 3-deoxy-D-manno-octulosonate from D-ribulose 5-phosphate: step 2/3. The protein operates within bacterial outer membrane biogenesis; lipopolysaccharide biosynthesis. This chain is 2-dehydro-3-deoxyphosphooctonate aldolase, found in Rickettsia typhi (strain ATCC VR-144 / Wilmington).